The following is a 176-amino-acid chain: Inner membrane-spanning protein YciB (176 aa).

The next 6 membrane-spanning stretches (helical) occupy residues 3-23, 24-44, 49-69, 72-92, 121-141, and 149-169; these read FLFD…WGIF, TATA…AFRH, TMLW…LVLH, KFIQ…LLAA, VAWA…VHNF, and FKLF…SLWL.

Belongs to the YciB family.

It localises to the cell inner membrane. Its function is as follows. Plays a role in cell envelope biogenesis, maintenance of cell envelope integrity and membrane homeostasis. In Burkholderia orbicola (strain MC0-3), this protein is Inner membrane-spanning protein YciB.